The following is a 371-amino-acid chain: Ligninase LG2 (371 aa).

A signal peptide spans 1–21 (MAFKQLFAAITVALSLTAANA). A propeptide spanning residues 22 to 28 (AVVKEKR) is cleaved from the precursor. 4 disulfide bridges follow: Cys-31–Cys-43, Cys-42–Cys-313, Cys-62–Cys-148, and Cys-277–Cys-345. The active-site Proton acceptor is His-75. Ca(2+) contacts are provided by Asp-76, Gly-94, Asp-96, and Ser-98. The residue at position 199 (Trp-199) is a 3-hydroxytryptophan. Residue His-204 participates in heme b binding. Positions 205, 222, 224, 227, and 229 each coordinate Ca(2+). Residue Asn-285 is glycosylated (N-linked (GlcNAc...) asparagine).

This sequence belongs to the peroxidase family. Ligninase subfamily. Ca(2+) serves as cofactor. Requires heme b as cofactor.

The catalysed reaction is 1-(3,4-dimethoxyphenyl)-2-(2-methoxyphenoxy)propane-1,3-diol + H2O2 = 3,4-dimethoxybenzaldehyde + guaiacol + glycolaldehyde + H2O. It carries out the reaction 2 (3,4-dimethoxyphenyl)methanol + H2O2 = 2 (3,4-dimethoxyphenyl)methanol radical + 2 H2O. Its pathway is secondary metabolite metabolism; lignin degradation. Its function is as follows. Depolymerization of lignin. Catalyzes the C(alpha)-C(beta) cleavage of the propyl side chains of lignin. This Phanerodontia chrysosporium (White-rot fungus) protein is Ligninase LG2 (GLG2).